The following is a 459-amino-acid chain: Endoglucanase CelA (459 aa).

Residues 1–27 form the signal peptide; sequence MKRLLALLATGVSIVGLTALAGPPAQA. Residues 28–134 form the CBM2 domain; the sequence is ATGCKAEYTI…TLNGATCSGS (107 aa). Cysteine 31 and cysteine 131 are disulfide-bonded. The interval 129-151 is disordered; it reads ATCSGSVTDPPTDPPTDPPATGT. A linker ('hinge') (Pro-Thr box) region spans residues 136–147; it reads TDPPTDPPTDPP. Residues 148–357 are catalytic; sequence ATGTPAAVNG…YAFHFYAASH (210 aa). Glutamate 286 functions as the Proton donor in the catalytic mechanism. Glutamate 378 acts as the Nucleophile in catalysis.

This sequence belongs to the glycosyl hydrolase 5 (cellulase A) family. The linker region (also termed 'hinge') may be a potential site for proteolysis.

The enzyme catalyses Endohydrolysis of (1-&gt;4)-beta-D-glucosidic linkages in cellulose, lichenin and cereal beta-D-glucans.. The polypeptide is Endoglucanase CelA (celA) (Streptomyces lividans).